Here is a 56-residue protein sequence, read N- to C-terminus: MAVQQNKKSRSRRDMRRSHDALTTAAVSVDKTTGETHLRHHVTADGYYCGRKVINK.

The disordered stretch occupies residues 1–27 (MAVQQNKKSRSRRDMRRSHDALTTAAV). Residues 7 to 16 (KKSRSRRDMR) are compositionally biased toward basic residues.

Belongs to the bacterial ribosomal protein bL32 family.

This is Large ribosomal subunit protein bL32 from Actinobacillus pleuropneumoniae serotype 7 (strain AP76).